Reading from the N-terminus, the 240-residue chain is Leucyl/phenylalanyl-tRNA--protein transferase (240 aa).

It belongs to the L/F-transferase family.

The protein localises to the cytoplasm. The enzyme catalyses N-terminal L-lysyl-[protein] + L-leucyl-tRNA(Leu) = N-terminal L-leucyl-L-lysyl-[protein] + tRNA(Leu) + H(+). The catalysed reaction is N-terminal L-arginyl-[protein] + L-leucyl-tRNA(Leu) = N-terminal L-leucyl-L-arginyl-[protein] + tRNA(Leu) + H(+). It catalyses the reaction L-phenylalanyl-tRNA(Phe) + an N-terminal L-alpha-aminoacyl-[protein] = an N-terminal L-phenylalanyl-L-alpha-aminoacyl-[protein] + tRNA(Phe). Its function is as follows. Functions in the N-end rule pathway of protein degradation where it conjugates Leu, Phe and, less efficiently, Met from aminoacyl-tRNAs to the N-termini of proteins containing an N-terminal arginine or lysine. This chain is Leucyl/phenylalanyl-tRNA--protein transferase, found in Maridesulfovibrio salexigens (strain ATCC 14822 / DSM 2638 / NCIMB 8403 / VKM B-1763) (Desulfovibrio salexigens).